Here is a 341-residue protein sequence, read N- to C-terminus: L-threonine 3-dehydrogenase (341 aa).

Zn(2+) is bound at residue Cys38. Catalysis depends on charge relay system residues Thr40 and His43. Zn(2+) contacts are provided by His63, Glu64, Cys93, Cys96, Cys99, and Cys107. NAD(+) is bound by residues Ile175, Asp195, Arg200, 262–264, and 286–287; these read LGI and IY.

The protein belongs to the zinc-containing alcohol dehydrogenase family. In terms of assembly, homotetramer. Requires Zn(2+) as cofactor.

Its subcellular location is the cytoplasm. It carries out the reaction L-threonine + NAD(+) = (2S)-2-amino-3-oxobutanoate + NADH + H(+). The protein operates within amino-acid degradation; L-threonine degradation via oxydo-reductase pathway; glycine from L-threonine: step 1/2. Catalyzes the NAD(+)-dependent oxidation of L-threonine to 2-amino-3-ketobutyrate. This is L-threonine 3-dehydrogenase from Shewanella sp. (strain MR-7).